The sequence spans 69 residues: Putative membrane protein insertion efficiency factor (69 aa).

It belongs to the UPF0161 family.

It is found in the cell membrane. Its function is as follows. Could be involved in insertion of integral membrane proteins into the membrane. The polypeptide is Putative membrane protein insertion efficiency factor (Clostridium botulinum (strain Kyoto / Type A2)).